Here is an 83-residue protein sequence, read N- to C-terminus: Exodeoxyribonuclease 7 small subunit (83 aa).

Belongs to the XseB family. Heterooligomer composed of large and small subunits.

The protein resides in the cytoplasm. The catalysed reaction is Exonucleolytic cleavage in either 5'- to 3'- or 3'- to 5'-direction to yield nucleoside 5'-phosphates.. Bidirectionally degrades single-stranded DNA into large acid-insoluble oligonucleotides, which are then degraded further into small acid-soluble oligonucleotides. The protein is Exodeoxyribonuclease 7 small subunit of Mesorhizobium japonicum (strain LMG 29417 / CECT 9101 / MAFF 303099) (Mesorhizobium loti (strain MAFF 303099)).